The following is a 461-amino-acid chain: Argininosuccinate lyase (461 aa).

The protein belongs to the lyase 1 family. Argininosuccinate lyase subfamily.

The protein localises to the cytoplasm. The enzyme catalyses 2-(N(omega)-L-arginino)succinate = fumarate + L-arginine. It participates in amino-acid biosynthesis; L-arginine biosynthesis; L-arginine from L-ornithine and carbamoyl phosphate: step 3/3. In Symbiobacterium thermophilum (strain DSM 24528 / JCM 14929 / IAM 14863 / T), this protein is Argininosuccinate lyase.